The sequence spans 263 residues: Endonuclease 8 (263 aa).

The Schiff-base intermediate with DNA role is filled by Pro-2. The Proton donor role is filled by Glu-3. Lys-53 (proton donor; for beta-elimination activity) is an active-site residue. Gln-70, Arg-125, and Asn-169 together coordinate DNA. The FPG-type zinc finger occupies 229–263; sequence KVFHRDGEACERCGGIIEKTTLSSRPFYWCAHCQK. The Proton donor; for delta-elimination activity role is filled by Arg-253.

It belongs to the FPG family. Requires Zn(2+) as cofactor.

It carries out the reaction 2'-deoxyribonucleotide-(2'-deoxyribose 5'-phosphate)-2'-deoxyribonucleotide-DNA = a 3'-end 2'-deoxyribonucleotide-(2,3-dehydro-2,3-deoxyribose 5'-phosphate)-DNA + a 5'-end 5'-phospho-2'-deoxyribonucleoside-DNA + H(+). Involved in base excision repair of DNA damaged by oxidation or by mutagenic agents. Acts as a DNA glycosylase that recognizes and removes damaged bases. Has a preference for oxidized pyrimidines, such as thymine glycol, 5,6-dihydrouracil and 5,6-dihydrothymine. Has AP (apurinic/apyrimidinic) lyase activity and introduces nicks in the DNA strand. Cleaves the DNA backbone by beta-delta elimination to generate a single-strand break at the site of the removed base with both 3'- and 5'-phosphates. This Salmonella typhi protein is Endonuclease 8.